The chain runs to 481 residues: Glutamyl-tRNA(Gln) amidotransferase subunit A (481 aa).

Active-site charge relay system residues include Lys74 and Ser149. The Acyl-ester intermediate role is filled by Ser173.

Belongs to the amidase family. GatA subfamily. Heterotrimer of A, B and C subunits.

It catalyses the reaction L-glutamyl-tRNA(Gln) + L-glutamine + ATP + H2O = L-glutaminyl-tRNA(Gln) + L-glutamate + ADP + phosphate + H(+). Functionally, allows the formation of correctly charged Gln-tRNA(Gln) through the transamidation of misacylated Glu-tRNA(Gln) in organisms which lack glutaminyl-tRNA synthetase. The reaction takes place in the presence of glutamine and ATP through an activated gamma-phospho-Glu-tRNA(Gln). The chain is Glutamyl-tRNA(Gln) amidotransferase subunit A from Francisella tularensis subsp. novicida (strain U112).